The primary structure comprises 197 residues: Large ribosomal subunit protein uL10 (197 aa).

The tract at residues 162–197 is disordered; it reads READGETAETPAQETASDDSKSTKAEASDASTTENK. Over residues 179–188 the composition is skewed to basic and acidic residues; sequence DDSKSTKAEA.

It belongs to the universal ribosomal protein uL10 family. In terms of assembly, part of the ribosomal stalk of the 50S ribosomal subunit. The N-terminus interacts with L11 and the large rRNA to form the base of the stalk. The C-terminus forms an elongated spine to which L12 dimers bind in a sequential fashion forming a multimeric L10(L12)X complex.

Functionally, forms part of the ribosomal stalk, playing a central role in the interaction of the ribosome with GTP-bound translation factors. The polypeptide is Large ribosomal subunit protein uL10 (Oenococcus oeni (strain ATCC BAA-331 / PSU-1)).